A 251-amino-acid polypeptide reads, in one-letter code: Hydroxyacylglutathione hydrolase (251 aa).

Residues His-53, His-55, Asp-57, His-58, His-110, Asp-127, and His-165 each coordinate Zn(2+).

It belongs to the metallo-beta-lactamase superfamily. Glyoxalase II family. Monomer. Zn(2+) is required as a cofactor.

The catalysed reaction is an S-(2-hydroxyacyl)glutathione + H2O = a 2-hydroxy carboxylate + glutathione + H(+). It participates in secondary metabolite metabolism; methylglyoxal degradation; (R)-lactate from methylglyoxal: step 2/2. Its function is as follows. Thiolesterase that catalyzes the hydrolysis of S-D-lactoyl-glutathione to form glutathione and D-lactic acid. This is Hydroxyacylglutathione hydrolase from Yersinia pseudotuberculosis serotype IB (strain PB1/+).